A 372-amino-acid chain; its full sequence is Serine/threonine-protein kinase 17B (372 aa).

The 261-residue stretch at 33–293 (ILTSKELGRG…AEICLSHSWL (261 aa)) folds into the Protein kinase domain. Residues 39-47 (LGRGKFAVV) and Lys-62 contribute to the ATP site. Catalysis depends on Asp-158, which acts as the Proton acceptor. Residues 305–362 (EETSSSSQTQDHSVRSSEDKTSKSSCNGTCGDREDKENIPEDSSMVSKRFRFDDSLPN) are disordered. The span at 316–326 (HSVRSSEDKTS) shows a compositional bias: basic and acidic residues.

The protein belongs to the protein kinase superfamily. CAMK Ser/Thr protein kinase family. DAP kinase subfamily. Interacts with CHP1; the interaction induces CHP1 to translocate from the Golgi to the nucleus. In terms of processing, autophosphorylated. In terms of tissue distribution, highly expressed in placenta, lung, pancreas. Lower levels in heart, brain, liver, skeletal muscle and kidney.

The protein resides in the nucleus. It localises to the cell membrane. It is found in the endoplasmic reticulum-Golgi intermediate compartment. It catalyses the reaction L-seryl-[protein] + ATP = O-phospho-L-seryl-[protein] + ADP + H(+). It carries out the reaction L-threonyl-[protein] + ATP = O-phospho-L-threonyl-[protein] + ADP + H(+). Phosphorylates myosin light chains. Acts as a positive regulator of apoptosis. The polypeptide is Serine/threonine-protein kinase 17B (STK17B) (Homo sapiens (Human)).